The chain runs to 226 residues: Glutathione S-transferase kappa 1 (226 aa).

16–18 (SPY) contributes to the glutathione binding site. An N6-succinyllysine mark is found at K36 and K49. N53 is a binding site for glutathione. N6-acetyllysine; alternate occurs at positions 68 and 74. N6-succinyllysine; alternate is present on residues K68 and K74. At K85 the chain carries N6-acetyllysine. N6-acetyllysine; alternate occurs at positions 93 and 116. N6-succinyllysine; alternate is present on residues K93 and K116. Residue K144 is modified to N6-succinyllysine. K158 is modified (N6-acetyllysine; alternate). K158 bears the N6-succinyllysine; alternate mark. K165 is modified (N6-acetyllysine). N6-acetyllysine; alternate is present on residues K167 and K177. N6-succinyllysine; alternate is present on residues K167 and K177. L183 lines the glutathione pocket. K193 carries the N6-succinyllysine modification. A glutathione-binding site is contributed by 200–201 (SD).

Belongs to the GST superfamily. Kappa family. In terms of assembly, homodimer.

The protein localises to the mitochondrion matrix. It carries out the reaction RX + glutathione = an S-substituted glutathione + a halide anion + H(+). In terms of biological role, glutathione S-transferase that catalyzes the conjugation of glutathione to exogenous and endogenous compounds. This is Glutathione S-transferase kappa 1 (Gstk1) from Rattus norvegicus (Rat).